We begin with the raw amino-acid sequence, 255 residues long: 3-deoxy-manno-octulosonate cytidylyltransferase (255 aa).

It belongs to the KdsB family.

The protein resides in the cytoplasm. It carries out the reaction 3-deoxy-alpha-D-manno-oct-2-ulosonate + CTP = CMP-3-deoxy-beta-D-manno-octulosonate + diphosphate. It participates in nucleotide-sugar biosynthesis; CMP-3-deoxy-D-manno-octulosonate biosynthesis; CMP-3-deoxy-D-manno-octulosonate from 3-deoxy-D-manno-octulosonate and CTP: step 1/1. It functions in the pathway bacterial outer membrane biogenesis; lipopolysaccharide biosynthesis. Its function is as follows. Activates KDO (a required 8-carbon sugar) for incorporation into bacterial lipopolysaccharide in Gram-negative bacteria. This Psychromonas ingrahamii (strain DSM 17664 / CCUG 51855 / 37) protein is 3-deoxy-manno-octulosonate cytidylyltransferase.